The following is a 251-amino-acid chain: Insulin-induced gene 1 protein (251 aa).

The Cytoplasmic portion of the chain corresponds to 1-58 (MQTLEEHCWSCSCTRGRDKKGTRLSTWLAQRAAKAMSSLNSLLSLAYHTLASSEGRSL). Residues 59–81 (IRRSLVLFAVGVFLALVLNLLQI) traverse the membrane as a helical segment. Topologically, residues 82–100 (QRNVTLFPEEVIATIFSSA) are extracellular. The chain crosses the membrane as a helical span at residues 101 to 118 (WWVPPCCGTAAAVVGLLY). At 119–133 (PCIDSHLGEPHKFKR) the chain is on the cytoplasmic side. Residues 134–156 (EWASVMRCIAVFVGINHASAKLD) traverse the membrane as a helical segment. Residues 157–159 (FAN) lie on the Extracellular side of the membrane. The helical transmembrane segment at 160–178 (NVQLSLTLAALSLGLWWTF) threads the bilayer. Topologically, residues 179–183 (DRSRS) are cytoplasmic. Residues 184 to 205 (GLGLGITIAFLATLITQFLVYN) form a helical membrane-spanning segment. Topologically, residues 206–219 (GVYQYTSPDFLYIR) are extracellular. Residues 220 to 237 (SWLPCIFFSGGVTVGNIG) traverse the membrane as a helical segment. Topologically, residues 238–251 (RQLAMGSSEKTHSD) are cytoplasmic. The KxHxx signature appears at 245 to 251 (SEKTHSD).

Belongs to the INSIG family. In terms of assembly, interacts with scap; interaction is direct and only takes place in the presence of sterols; it prevents interaction between scap and the coat protein complex II (COPII). Associates with the SCAP-SREBP complex; association is mediated via its interaction with scap and only takes place in the presence of sterols.

It is found in the endoplasmic reticulum membrane. In terms of biological role, oxysterol-binding protein that mediates feedback control of cholesterol synthesis by controlling both endoplasmic reticulum to Golgi transport of scap and degradation of hmgcr. Acts as a negative regulator of cholesterol biosynthesis by mediating the retention of the SCAP-SREBP complex in the endoplasmic reticulum, thereby blocking the processing of sterol regulatory element-binding proteins (SREBPs). Binds oxysterol, including 25-hydroxycholesterol, regulating interaction with scap and retention of the SCAP-SREBP complex in the endoplasmic reticulum. In presence of oxysterol, interacts with scap, retaining the SCAP-SREBP complex in the endoplasmic reticulum, thereby preventing scap from escorting SREBPs to the Golgi. Sterol deprivation reduces oxysterol-binding, disrupting the interaction between insig1 and scap, thereby promoting Golgi transport of the SCAP-SREBP complex, followed by processing and nuclear translocation of SREBPs. Also regulates cholesterol synthesis by regulating degradation of hmgcr. The sequence is that of Insulin-induced gene 1 protein from Xenopus tropicalis (Western clawed frog).